Reading from the N-terminus, the 397-residue chain is Teichoic acid D-alanine hydrolase (397 aa).

Residues M1–A23 form the signal peptide.

The protein resides in the cell membrane. The enzyme catalyses [(4-D-Ala)-(2-GlcNAc)-Rib-ol-P]n-[Gro-P]m-beta-D-ManNAc-(1-&gt;4)-alpha-D-GlcNAc-P-peptidoglycan + n H2O = [(2-GlcNAc)-Rib-ol-P]n-[Gro-P]m-beta-D-ManNAc-(1-&gt;4)-alpha-D-GlcNAc-P-peptidoglycan + n D-alanine.. Catalyzes the liberation of D-alanyl moieties present on wall teichoic acid (WTA) and lipoteichoic acid (LTA). Affects the methicillin resistance level and autolysis in the presence of Triton X-100 as well as the cell wall structure. The polypeptide is Teichoic acid D-alanine hydrolase (fmtA) (Staphylococcus aureus (strain NCTC 8325 / PS 47)).